A 584-amino-acid polypeptide reads, in one-letter code: Arginine--tRNA ligase (584 aa).

Residues 127–137 (PNTNKPLHVGH) carry the 'HIGH' region motif.

The protein belongs to the class-I aminoacyl-tRNA synthetase family. Monomer.

Its subcellular location is the cytoplasm. The enzyme catalyses tRNA(Arg) + L-arginine + ATP = L-arginyl-tRNA(Arg) + AMP + diphosphate. The sequence is that of Arginine--tRNA ligase from Borrelia turicatae (strain 91E135).